The following is a 542-amino-acid chain: CTP synthase (542 aa).

Residues 1–265 (MPRYIFITGG…DTEILRCFGI (265 aa)) form an amidoligase domain region. Serine 13 provides a ligand contact to CTP. Serine 13 is a UTP binding site. ATP is bound at residue 14 to 19 (SLGKGL). Position 54 (tyrosine 54) interacts with L-glutamine. Aspartate 71 is an ATP binding site. Mg(2+) is bound by residues aspartate 71 and glutamate 139. Residues 146–148 (DIE), 186–191 (KTKPTQ), and lysine 222 each bind CTP. UTP contacts are provided by residues 186–191 (KTKPTQ) and lysine 222. 238 to 240 (RDA) is an ATP binding site. In terms of domain architecture, Glutamine amidotransferase type-1 spans 298-541 (YVGLLDAYKS…IAAALHQSRM (244 aa)). Residue glycine 353 participates in L-glutamine binding. Catalysis depends on cysteine 380, which acts as the Nucleophile; for glutamine hydrolysis. Residues 381 to 384 (YGMQ), glutamate 404, and arginine 469 each bind L-glutamine. Catalysis depends on residues histidine 514 and glutamate 516.

It belongs to the CTP synthase family. Homotetramer.

The enzyme catalyses UTP + L-glutamine + ATP + H2O = CTP + L-glutamate + ADP + phosphate + 2 H(+). The catalysed reaction is L-glutamine + H2O = L-glutamate + NH4(+). It carries out the reaction UTP + NH4(+) + ATP = CTP + ADP + phosphate + 2 H(+). It participates in pyrimidine metabolism; CTP biosynthesis via de novo pathway; CTP from UDP: step 2/2. Allosterically activated by GTP, when glutamine is the substrate; GTP has no effect on the reaction when ammonia is the substrate. The allosteric effector GTP functions by stabilizing the protein conformation that binds the tetrahedral intermediate(s) formed during glutamine hydrolysis. Inhibited by the product CTP, via allosteric rather than competitive inhibition. Functionally, catalyzes the ATP-dependent amination of UTP to CTP with either L-glutamine or ammonia as the source of nitrogen. Regulates intracellular CTP levels through interactions with the four ribonucleotide triphosphates. The sequence is that of CTP synthase from Maricaulis maris (strain MCS10) (Caulobacter maris).